The following is a 313-amino-acid chain: MSGIDPKRFGKVAVLFGGESAEREVSLTSGRLVLQGLRDAGVDAHPFDPAERPLSALKDEGFVRAFNALHGGYGENGQIQGALDFYGIRYTGSGVLGSALGLDKFRTKLVWQQTGVPTPPFETVMRGDDLAARATDIVAKLGLPLFVKPASEGSSVAVLKVKTADALPAALAEAATHDKIVIVEKSIEGGGEYTACIAGDLDLPLIKIVPAGEFYDYHAKYVADDTQYLIPCGLPAEQEAELKRIARRAFAVLGCTDWGRADFMLDAAGNAYFLEVNTAPGMTDHSLPPKAARAVGIGYSELVVKVLSLTLND.

Residues 108 to 308 form the ATP-grasp domain; sequence KLVWQQTGVP…YSELVVKVLS (201 aa). Residue 138-193 participates in ATP binding; the sequence is VAKLGLPLFVKPASEGSSVAVLKVKTADALPAALAEAATHDKIVIVEKSIEGGGEY. Residues D262, E275, and N277 each contribute to the Mg(2+) site.

Belongs to the D-alanine--D-alanine ligase family. Mg(2+) is required as a cofactor. Requires Mn(2+) as cofactor.

The protein localises to the cytoplasm. It carries out the reaction 2 D-alanine + ATP = D-alanyl-D-alanine + ADP + phosphate + H(+). The protein operates within cell wall biogenesis; peptidoglycan biosynthesis. Functionally, cell wall formation. In Burkholderia orbicola (strain MC0-3), this protein is D-alanine--D-alanine ligase.